The following is a 270-amino-acid chain: MQYPHPGPAAGAVGVPLYAPTPLLQPAHPTPFYIEDILGRGPAAPTPAPTLPSPNSSFTSLVSPYRTPVYEPTPIHPAFSHHSAAALAAAYGPGGFGGPLYPFPRTVNDYTHALLRHDPLGKPLLWSPFLQRPLHKRKGGQVRFSNDQTIELEKKFETQKYLSPPERKRLAKMLQLSERQVKTWFQNRRAKWRRLKQENPQSNKKEELESLDSSCDQRQDLPSEQNKGASLDSSQCSPSPASQEDLESEISEDSDQEVDIEGDKSYFNAG.

The interaction with SOX13 stretch occupies residues 1–137 (MQYPHPGPAA…PFLQRPLHKR (137 aa)). The residue at position 53 (S53) is a Phosphoserine. A DNA-binding region (homeobox) is located at residues 137–196 (RKGGQVRFSNDQTIELEKKFETQKYLSPPERKRLAKMLQLSERQVKTWFQNRRAKWRRLK). The segment at 137–270 (RKGGQVRFSN…EGDKSYFNAG (134 aa)) is required for WNT signaling induction. The interval 194-270 (RLKQENPQSN…EGDKSYFNAG (77 aa)) is disordered. Residues 222 to 241 (PSEQNKGASLDSSQCSPSPA) are compositionally biased toward polar residues. Residues 244-260 (EDLESEISEDSDQEVDI) show a composition bias toward acidic residues.

Interacts with CD81; the interaction prevents nuclear translocation of HHEX. Interacts (via N-terminus) with SOX13; abolishes the SOX13-mediated inhibition of WNT-mediated transcriptional activity via competitive inhibition of the SOX13-TCF7 complex. Interacts with EIF4E; the interaction inhibits EIF4E-mediated mRNA nuclear export. Liver and promyelocytic leukemia cell line HL-60.

It is found in the nucleus. The protein localises to the nuclear body. It localises to the cytoplasm. Functionally, recognizes the DNA sequence 5'-ATTAA-3'. Transcriptional repressor. Activator of WNT-mediated transcription in conjunction with CTNNB1. Establishes anterior identity at two levels; acts early to enhance canonical WNT-signaling by repressing expression of TLE4, and acts later to inhibit NODAL-signaling by directly targeting NODAL. Inhibits EIF4E-mediated mRNA nuclear export. May play a role in hematopoietic differentiation. This Homo sapiens (Human) protein is Hematopoietically-expressed homeobox protein HHEX (HHEX).